A 502-amino-acid polypeptide reads, in one-letter code: Membrane protein insertase YidC (502 aa).

Transmembrane regions (helical) follow at residues 12–32 (FLIF…FYIY), 286–306 (LDWG…YWIY), 312–332 (WVLS…PLGY), 382–402 (LPIL…IITV), 409–429 (FLWI…VIMG), and 452–472 (ITSV…VLYW).

It belongs to the OXA1/ALB3/YidC family. Type 1 subfamily. In terms of assembly, interacts with the Sec translocase complex via SecD. Specifically interacts with transmembrane segments of nascent integral membrane proteins during membrane integration.

The protein resides in the cell membrane. Its function is as follows. Required for the insertion and/or proper folding and/or complex formation of integral membrane proteins into the membrane. Involved in integration of membrane proteins that insert both dependently and independently of the Sec translocase complex, as well as at least some lipoproteins. Aids folding of multispanning membrane proteins. The sequence is that of Membrane protein insertase YidC from Aquifex aeolicus (strain VF5).